We begin with the raw amino-acid sequence, 1481 residues long: Cystic fibrosis transmembrane conductance regulator (1481 aa).

The Cytoplasmic segment spans residues 1–77 (MQRSPLEKAS…KLINALRRCF (77 aa)). Residues 78 to 98 (FWRFMFYGIILYLGEVTKAVQ) form a helical membrane-spanning segment. Positions 81 to 365 (FMFYGIILYL…WAVQTWYDSL (285 aa)) constitute an ABC transmembrane type-1 1 domain. Over 99-122 (PLLLGRIIASYDPDNKAERSIAIY) the chain is Extracellular. The helical transmembrane segment at 123–146 (LGIGLCLLFIVRTLLLHPAIFGLH) threads the bilayer. Residues 147 to 195 (HIGMQMRIAMFSLIYKKTLKLSSRVLDKISIGQLVSLLSNNLNKFDEGL) are Cytoplasmic-facing. Residues 196–216 (ALAHFVWIAPLQVTLLMGLLW) traverse the membrane as a helical segment. At 217–222 (ELLQAF) the chain is on the extracellular side. Residues 223–243 (TFCGLAFLVVLAFLQAGLGKM) traverse the membrane as a helical segment. Residues 244-298 (MMKYRDQRAGKINERLVITSEIIENIQSVKAYCWEEAMEKIIENLRQTELKLTRK) are Cytoplasmic-facing. The chain crosses the membrane as a helical span at residues 299–319 (AAYVRYLNSSAFFFSGFFVVF). The Extracellular portion of the chain corresponds to 320-339 (LSVLPYALLKGIILRKIFTT). A helical transmembrane segment spans residues 340–358 (ISFCIVLRMAVTRQFPWAV). Topologically, residues 359-858 (QTWYDSLGAI…YLRYITVHKS (500 aa)) are cytoplasmic. ATP contacts are provided by residues W401, 457-464 (GSTGAGKT), and Q492. Residues 423–645 (NGDNNLFFSN…RPDFSSKLMG (223 aa)) enclose the ABC transporter 1 domain. C523 is lipidated: S-palmitoyl cysteine. 2 positions are modified to phosphoserine: S548 and S659. Residues 653 to 831 (TAERRNSIIT…EEINEEDLRD (179 aa)) are disordered R region. S669 carries the phosphoserine; by PKA modification. S685 carries the post-translational modification Phosphoserine. K687 participates in a covalent cross-link: Glycyl lysine isopeptide (Lys-Gly) (interchain with G-Cter in ubiquitin). S699 and S711 each carry phosphoserine. T716 bears the Phosphothreonine mark. A phosphoserine mark is found at S736, S767, S790, S795, and S813. A helical transmembrane segment spans residues 859-879 (LMFVLIWCLVVFLAEVAASLV). Residues 859–1155 (LMFVLIWCLV…AVNSSIDVDS (297 aa)) enclose the ABC transmembrane type-1 2 domain. The Extracellular portion of the chain corresponds to 880–918 (VLCLFPKILFQDKGNSTKSANNSYAVIITSTSSYYIFYI). 2 N-linked (GlcNAc...) asparagine glycosylation sites follow: N894 and N900. A discontinuously helical transmembrane segment spans residues 919–939 (YVGVADTLLALGLFRGLPLVH). Over 940 to 990 (TLITVSKTLHHKMLQSVLQAPMSTLNTLKTGGILNRFSKDIAVLDDLLPLT) the chain is Cytoplasmic. Residues 991 to 1011 (IFDFVQLLLIVIGAVVVVSVL) traverse the membrane as a helical segment. At 1012-1013 (QP) the chain is on the extracellular side. Residues 1014 to 1034 (YIFLATVPVIAAFILLRAYFL) form a helical membrane-spanning segment. Topologically, residues 1035–1095 (HTSQQLKQLE…TANWFLYLST (61 aa)) are cytoplasmic. A helical transmembrane segment spans residues 1096–1116 (LRWFQMRIEMIFVIFFIAVTF). Residues 1117–1130 (ISILTTGEGEGRVG) are Extracellular-facing. The helical transmembrane segment at 1131–1151 (IILTLAMNIMGTLQWAVNSSI) threads the bilayer. Residues 1152-1481 (DVDSLMRSVS…TEEEVQETKI (330 aa)) are Cytoplasmic-facing. An ABC transporter 2 domain is found at 1211-1444 (MTVKDLTAKY…KSLFRQAISP (234 aa)). Residues Y1220 and 1245–1252 (GRTGSGKS) contribute to the ATP site. The tract at residues 1387–1481 (RTLKQAFADC…TEEEVQETKI (95 aa)) is interaction with GORASP2. The S-palmitoyl cysteine moiety is linked to residue C1396. A disordered region spans residues 1452-1481 (PQRNSSRQKSRSNIAALKEETEEEVQETKI). Residues 1453–1464 (QRNSSRQKSRSN) show a composition bias toward low complexity. A Phosphoserine modification is found at S1457. A compositionally biased stretch (acidic residues) spans 1471-1481 (ETEEEVQETKI). The PDZ-binding motif lies at 1479–1481 (TKI).

The protein belongs to the ABC transporter superfamily. ABCC family. CFTR transporter (TC 3.A.1.202) subfamily. As to quaternary structure, monomer; does not require oligomerization for channel activity. May form oligomers in the membrane. Interacts with SLC26A3, SLC26A6 and NHERF1. Interacts with SHANK2. Interacts with MYO6. Interacts (via C-terminus) with GOPC (via PDZ domain); this promotes CFTR internalization and thereby decreases channel activity. Interacts with SLC4A7 through NHERF1. Found in a complex with MYO5B and RAB11A. Interacts with ANO1. Interacts with SLC26A8. Interacts with AHCYL1; the interaction increases CFTR activity. Interacts with CSE1L. The core-glycosylated form interacts with GORASP2 (via PDZ GRASP-type 1 domain) in respone to ER stress. Interacts with MARCHF2; the interaction leads to CFTR ubiqtuitination and degradation. Interacts with ADGRG2. Post-translationally, N-glycosylated. In terms of processing, phosphorylated; cAMP treatment promotes phosphorylation and activates the channel. Dephosphorylation decreases the ATPase activity (in vitro). Phosphorylation at PKA sites activates the channel. Phosphorylation at PKC sites enhances the response to phosphorylation by PKA. Phosphorylated by AMPK; this inhibits channel activity. Ubiquitinated, leading to its degradation in the lysosome. Deubiquitination by USP10 in early endosomes enhances its endocytic recycling to the cell membrane. Ubiquitinated by RNF185 during ER stress. Ubiquitinated by MARCHF2.

The protein localises to the apical cell membrane. It is found in the early endosome membrane. It localises to the cell membrane. Its subcellular location is the recycling endosome membrane. The protein resides in the endoplasmic reticulum membrane. The protein localises to the nucleus. The enzyme catalyses ATP + H2O + closed Cl(-) channel = ADP + phosphate + open Cl(-) channel.. The catalysed reaction is chloride(in) = chloride(out). It catalyses the reaction hydrogencarbonate(in) = hydrogencarbonate(out). It carries out the reaction ATP + H2O = ADP + phosphate + H(+). Functionally, epithelial ion channel that plays an important role in the regulation of epithelial ion and water transport and fluid homeostasis. Mediates the transport of chloride ions across the cell membrane. Possesses an intrinsic ATPase activity and utilizes ATP to gate its channel; the passive flow of anions through the channel is gated by cycles of ATP binding and hydrolysis by the ATP-binding domains. The ion channel is also permeable to HCO(3)(-); selectivity depends on the extracellular chloride concentration. Exerts its function also by modulating the activity of other ion channels and transporters. Contributes to the regulation of the pH and the ion content of the epithelial fluid layer. Modulates the activity of the epithelial sodium channel (ENaC) complex, in part by regulating the cell surface expression of the ENaC complex. May regulate bicarbonate secretion and salvage in epithelial cells by regulating the transporter SLC4A7. Can inhibit the chloride channel activity of ANO1. Plays a role in the chloride and bicarbonate homeostasis during sperm epididymal maturation and capacitation. The polypeptide is Cystic fibrosis transmembrane conductance regulator (Muntiacus reevesi (Reeves' muntjac)).